The following is a 368-amino-acid chain: N-acetylneuraminate epimerase (368 aa).

Residues 1 to 19 (MNKTIMALAIMMASFAANA) form the signal peptide. 7 Kelch repeats span residues 40 to 84 (TVYI…AFID), 86 to 137 (NLYV…FVHN), 139 to 173 (KAYV…KINA), 174 to 219 (HYFD…VNKG), 222 to 265 (TWLI…VAGG), 287 to 336 (ENYQ…PWNN), and 338 to 367 (LLII…VTVQ). Glutamate 228 functions as the Proton acceptor in the catalytic mechanism.

It belongs to the NanM family. In terms of assembly, homodimer.

Its subcellular location is the periplasm. The enzyme catalyses N-acetyl-alpha-neuraminate = N-acetyl-beta-neuraminate. Functionally, converts alpha-N-acetylneuranimic acid (Neu5Ac) to the beta-anomer, accelerating the equilibrium between the alpha- and beta-anomers. Probably facilitates sialidase-negative bacteria to compete successfully for limited amounts of extracellular Neu5Ac, which is likely taken up in the beta-anomer. In addition, the rapid removal of sialic acid from solution might be advantageous to the bacterium to damp down host responses. The sequence is that of N-acetylneuraminate epimerase from Shigella sonnei (strain Ss046).